Reading from the N-terminus, the 201-residue chain is MARYTGPATRKSRRLGVDLVGGDQSFEKRPYPPGQHGRARIKESEYRQQLQEKQKARFSYGVMEKQFRRYYEEANRQPGKTGDNLLRILESRLDNVVYRAGLARTRRMARQLVSHGHFLVNGVKVDIPSYRVSQYDIIDVKEKSLNTLPFQIARETAGERPIPSWLQVVGERQRILVHQLPERAQIDVPLTEQLIVELYSK.

Residues 1-42 are disordered; sequence MARYTGPATRKSRRLGVDLVGGDQSFEKRPYPPGQHGRARIK. The S4 RNA-binding domain occupies 91–157; it reads SRLDNVVYRA…LPFQIARETA (67 aa).

The protein belongs to the universal ribosomal protein uS4 family. As to quaternary structure, part of the 30S ribosomal subunit. Contacts protein S5. The interaction surface between S4 and S5 is involved in control of translational fidelity.

One of the primary rRNA binding proteins, it binds directly to 16S rRNA where it nucleates assembly of the body of the 30S subunit. Its function is as follows. With S5 and S12 plays an important role in translational accuracy. The polypeptide is Small ribosomal subunit protein uS4 (Mycolicibacterium smegmatis (strain ATCC 700084 / mc(2)155) (Mycobacterium smegmatis)).